We begin with the raw amino-acid sequence, 264 residues long: Thymidylate synthase (264 aa).

R21 contacts dUMP. A (6R)-5,10-methylene-5,6,7,8-tetrahydrofolate-binding site is contributed by H51. 126 to 127 (RR) contacts dUMP. C146 (nucleophile) is an active-site residue. Residues 166–169 (RSCD), N177, and 207–209 (HLY) contribute to the dUMP site. D169 provides a ligand contact to (6R)-5,10-methylene-5,6,7,8-tetrahydrofolate. Position 263 (A263) interacts with (6R)-5,10-methylene-5,6,7,8-tetrahydrofolate.

It belongs to the thymidylate synthase family. Bacterial-type ThyA subfamily. As to quaternary structure, homodimer.

The protein resides in the cytoplasm. The enzyme catalyses dUMP + (6R)-5,10-methylene-5,6,7,8-tetrahydrofolate = 7,8-dihydrofolate + dTMP. Its pathway is pyrimidine metabolism; dTTP biosynthesis. Its function is as follows. Catalyzes the reductive methylation of 2'-deoxyuridine-5'-monophosphate (dUMP) to 2'-deoxythymidine-5'-monophosphate (dTMP) while utilizing 5,10-methylenetetrahydrofolate (mTHF) as the methyl donor and reductant in the reaction, yielding dihydrofolate (DHF) as a by-product. This enzymatic reaction provides an intracellular de novo source of dTMP, an essential precursor for DNA biosynthesis. This is Thymidylate synthase from Salmonella typhi.